The following is a 587-amino-acid chain: Trihelix transcription factor GTL1 (587 aa).

Gly residues-rich tracts occupy residues 1–10 and 41–54; these read MEQGGGGGGN and GGLGGGGGGGGGGS. The segment at 1–63 is disordered; sequence MEQGGGGGGN…SASSSSGNRW (63 aa). Residues 55–119 enclose the Myb-like 1 domain; the sequence is ASSSSGNRWP…KCKEKFENVQ (65 aa). The Nuclear localization signal 1 signature appears at 96 to 103; that stretch reads SRKLLELG. Residues 173–194 show a composition bias toward low complexity; the sequence is SSSPFPVFSQPQPQTQTQPPQT. A disordered region spans residues 173–264; sequence SSSPFPVFSQ…RKRGNRGGGG (92 aa). The segment covering 201 to 210 has biased composition (pro residues); the sequence is PTPPPLPLPS. Residues 221-232 show a composition bias toward low complexity; the sequence is SSHSSSTASGMG. The segment covering 233 to 242 has biased composition (acidic residues); sequence SDDDDDDMDV. Residues 285-328 adopt a coiled-coil conformation; sequence QRSFLEALEKREQERLDREEAWKRQEMARLAREHEVMSQERAAS. The disordered stretch occupies residues 348–435; sequence QLPPSLSSQP…EQSSLPSSSR (88 aa). Residues 356–366 show a composition bias toward pro residues; that stretch reads QPPPPYQPPPA. 2 stretches are compositionally biased toward low complexity: residues 379 to 395 and 411 to 434; these read AQSQSQQPIMAIPQQQI and QKQQQQPQQEMVMSSEQSSLPSSS. Positions 434–492 constitute a Myb-like 2 domain; that stretch reads SRWPKAEILALINLRSGMEPRYQDNVPKGLLWEEISTSMKRMGYNRNAKRCKEKWENIN. Residues 472 to 479 carry the Nuclear localization signal 2 motif; that stretch reads MKRMGYNR. Residues 530–587 form a disordered region; it reads GGGSSTSGLPQDQKQSPVTAMKPPQEGLVNVQQTHGSASTEEEEPIEESPQGTEKKTL. 2 stretches are compositionally biased toward polar residues: residues 538–547 and 559–568; these read LPQDQKQSPV and NVQQTHGSAS.

As to expression, mostly expressed in siliques, and, to a lower extent, in growing root hairs, leaves, stems, and flowers. Present in abaxial epidermal cells, predominantly in guard cells, pavement cells, and meristemoids.

It localises to the nucleus. Functionally, transcription repressor that binds specific DNA sequence such as GT3 box 5'-GGTAAA-3' in the SDD1 promoter. Negative regulator of water use efficiency (WUE) via the promotion of stomatal density and distribution by the transcription repression of SDD1. Regulates the expression of several cell cycle genes and endoreduplication, especially in trichomes where it prevents ploidy-dependent plant cell growth. Regulates negatively root hair growth by directly binding RSL4 promoter and repressing RSL4 expression. The chain is Trihelix transcription factor GTL1 from Arabidopsis thaliana (Mouse-ear cress).